The chain runs to 815 residues: Phosphate transporter PHO1-2 (815 aa).

Residues 1-421 (MVKFSREYEA…QQPRNTHMIT (421 aa)) lie on the Cytoplasmic side of the membrane. In terms of domain architecture, SPX spans 2–368 (VKFSREYEAS…EQQRATDLFS (367 aa)). Disordered stretches follow at residues 83–108 (SAGQ…STDK), 166–213 (RGLA…LELQ), and 242–266 (AGKK…GGGG). Residues 97 to 108 (PDRGELVRSTDK) show a composition bias toward basic and acidic residues. The segment covering 183–201 (PPSSVHGSSGRYLLSGLSS) has biased composition (low complexity). Over residues 202–213 (PQSMSDGSLELQ) the composition is skewed to polar residues. Residues 243–254 (GKKDGKTKDGSG) show a composition bias toward basic and acidic residues. Residues 255–266 (KGRGGGGGGGGG) show a composition bias toward gly residues. Residues 422–442 (FLVGLFTGTFVSLFIIYAILA) traverse the membrane as a helical segment. Residues 443-458 (HVSGIFTSTGNSAYME) are Extracellular-facing. A helical transmembrane segment spans residues 459 to 479 (IVYHVFSMFALISLHIFLYGC). Over 480-508 (NLFMWKNTRINHNFIFDFSSNTALTHRDA) the chain is Cytoplasmic. A helical membrane pass occupies residues 509 to 529 (FLMSASIMCTVVAALVINLFL). At 530–538 (KNAGVAYAN) the chain is on the extracellular side. A helical membrane pass occupies residues 539–559 (ALPGALLLLSTGVLFCPFDIF). At 560-686 (YRSTRYCFMR…VRFKYAATPT (127 aa)) the chain is on the cytoplasmic side. The EXS domain maps to 624-815 (TSGQQYKHLA…PLPFRELETD (192 aa)). Residues 687–707 (PFWVWMVIISSSGATIYQLYW) traverse the membrane as a helical segment. Residues 708–734 (DFVKDWGFLNPKSKNRWLRNELILKNK) are Extracellular-facing. The helical transmembrane segment at 735–751 (SIYYVSMMLNLALRLAW) threads the bilayer. The Cytoplasmic segment spans residues 752–815 (TESVMKIHIG…PLPFRELETD (64 aa)).

It belongs to the SYG1 (TC 2.A.94) family. Specifically expressed in roots.

It localises to the cell membrane. Its function is as follows. Involved in the transfer of inorganic phosphate (Pi) from roots to shoots. The chain is Phosphate transporter PHO1-2 (PHO1-2) from Oryza sativa subsp. japonica (Rice).